The primary structure comprises 128 residues: Keratin-associated protein 21-1 (128 aa).

Residues 11–117 (GGCGYGSRYG…RYGCGYGSGC (107 aa)) are 51 X 2 AA repeats of G-[YCGS].

The protein belongs to the KRTAP type 21 family. Interacts with hair keratins. As to expression, strong expression in narrowly defined pattern restricted to the lower and middle cortical regions of the hair shaft in both developing and cycling hair. During hair follicle regression (catagen), expression levels decrease until expression is no longer detectable in follicles at resting stage (telogen).

In terms of biological role, in the hair cortex, hair keratin intermediate filaments are embedded in an interfilamentous matrix, consisting of hair keratin-associated proteins (KRTAP), which are essential for the formation of a rigid and resistant hair shaft through their extensive disulfide bond cross-linking with abundant cysteine residues of hair keratins. The matrix proteins include the high-sulfur and high-glycine-tyrosine keratins. The sequence is that of Keratin-associated protein 21-1 (Krtap21-1) from Mus musculus (Mouse).